Consider the following 571-residue polypeptide: FAD-binding monooxygenase VdtE (571 aa).

Residues Val-44–Trp-47, Asp-56–Ser-57, and Tyr-62 each bind FAD. Position 54-56 (Arg-54–Asp-56) interacts with NADP(+). NADP(+) contacts are provided by residues Thr-187–Gln-193 and Arg-210–Thr-211.

This sequence belongs to the FAD-binding monooxygenase family. FAD is required as a cofactor.

The catalysed reaction is 9,10-dihydroxy-7-methoxy-3-(2-oxopropyl)-1H-benzo[g]isochromen-1-one + NADPH + O2 + H(+) = methyl 2-[(3S)-9,10-dihydroxy-7-methoxy-1-oxo-1H,3H,4H-naphtho[2,3-c]pyran-3-yl]acetate + NADP(+) + H2O. It catalyses the reaction (3S)-9,10-dihydroxy-7-methoxy-3-(2-oxopropyl)-1H,3H,4H-naphtho[2,3-c]pyran-1-one + NADPH + O2 + H(+) = semiviriditoxin + NADP(+) + H2O. Its pathway is secondary metabolite biosynthesis. Its function is as follows. FAD-binding monooxygenase; part of the gene cluster that mediates the biosynthesis of viriditoxin, one of the 'classical' secondary metabolites produced by fungi and that has antibacterial activity. The first step is performed by the polyketide synthase VdtA which condenses one acetyl-CoA and 6 malonyl-CoA units to form the heptaketide monomer backbone of viriditoxin. The product of VdtA is then O-methylated on C7 by the O-methyltransferase VdtC. The O-methyl group is important for the stereoselective coupling of the monomers at the final step of viriditoxin biosynthesis. The short-chain dehydrogenase/reductase VdtF then acts as a stereospecific reductase converting the pyrone to dihydropyrone via the reduction of the C3-C4 double bond. The FAD-binding monooxygenase VdtE then converts the ketone group into a methyl-ester group to yield semi-viriditoxin. Finally, the laccase VdtB is involved in dimerization of 2 semi-viriditoxin molecules to yield the final viriditoxin. VdtB is responsible for the regioselective 6,6'-coupling of semi-viriditoxin, which yields (M)-viriditoxin and (P)-viriditoxin at a ratio of 1:2. The non-catalytic carboxylesterase-like protein VdtD affects the stereochemistical outcome of the coupling. The highly reducing polyketide synthase VdtX is not involved in viriditoxin synthesis, but might possibly play a role in the production of additional metabolites not identified yet. In Byssochlamys spectabilis (Paecilomyces variotii), this protein is FAD-binding monooxygenase VdtE.